Here is a 1141-residue protein sequence, read N- to C-terminus: Myosin-binding protein C, slow-type (1141 aa).

Residues 1-10 are compositionally biased toward basic and acidic residues; that stretch reads MPEPTKKEEN. Residues 1-51 form a disordered region; the sequence is MPEPTKKEENEVPAPAPPPEEPSKEKEAGTTPAKDWTLVETPPGEEQAKQN. Ig-like C2-type domains follow at residues 72 to 144, 251 to 340, 341 to 431, 432 to 520, and 522 to 619; these read GEDI…RCEV, SAAF…VREP, PIMV…VDLK, PLKI…HVID, and PKII…VVDF. Residue threonine 406 is modified to Phosphothreonine. The residue at position 611 (serine 611) is a Phosphoserine. 2 Fibronectin type-III domains span residues 622 to 721 and 722 to 833; these read PPVA…TSPP and TLLT…VKEI. Threonine 798 bears the Phosphothreonine mark. Tyrosine 823 carries the phosphotyrosine modification. The 95-residue stretch at 837-931 folds into the Ig-like C2-type 6 domain; the sequence is PKIRIPRHLK…ASIDIQIIDR (95 aa). The Fibronectin type-III 3 domain maps to 934-1029; sequence PPQIVKIEDV…TKESAVIARD (96 aa). Positions 1047–1141 constitute an Ig-like C2-type 7 domain; it reads PMFTQPLVNT…CKLEVKVIAQ (95 aa).

The protein belongs to the immunoglobulin superfamily. MyBP family. As to quaternary structure, interacts with USP25 (isoform USP25m only); the interaction prevents proteasomal degradation of MYBPC1.

Its function is as follows. Thick filament-associated protein located in the crossbridge region of vertebrate striated muscle a bands. Slow skeletal protein that binds to both myosin and actin. In vitro, binds to native thin filaments and modifies the activity of actin-activated myosin ATPase. May modulate muscle contraction or may play a more structural role. The polypeptide is Myosin-binding protein C, slow-type (MYBPC1) (Homo sapiens (Human)).